The primary structure comprises 172 residues: Transmembrane protein 91 (172 aa).

The Extracellular segment spans residues 1–97 (MDNSSIQELQ…SPLLPHDHLG (97 aa)). A disordered region spans residues 60–86 (GLGEPETPDFEDTLSSDSDSDDDGGDR). Over residues 65–83 (ETPDFEDTLSSDSDSDDDG) the composition is skewed to acidic residues. The helical transmembrane segment at 98–118 (LAVFSVLCCFWPVGIAAFCLA) threads the bilayer. Residues 119–139 (HKTNKAWAKGDVQGAGAASRR) are Cytoplasmic-facing. A helical membrane pass occupies residues 140–160 (AFLLGVLAVGLGLCTYAAALV). Residues 161–172 (TLAAYLASRDPP) are Extracellular-facing.

Belongs to the CD225/Dispanin family.

The protein localises to the membrane. The sequence is that of Transmembrane protein 91 (Tmem91) from Mus musculus (Mouse).